Consider the following 236-residue polypeptide: Small ribosomal subunit protein uS2c (236 aa).

This sequence belongs to the universal ribosomal protein uS2 family.

It is found in the plastid. The protein localises to the chloroplast. This Guizotia abyssinica (Niger) protein is Small ribosomal subunit protein uS2c (rps2).